Here is a 141-residue protein sequence, read N- to C-terminus: uncharacterized protein (141 aa).

2 consecutive transmembrane segments (helical) span residues 12–32 and 35–55; these read GIAG…TLVT and PGRV…SATW.

The protein localises to the cell membrane. This is an uncharacterized protein from Mycobacterium tuberculosis (strain CDC 1551 / Oshkosh).